We begin with the raw amino-acid sequence, 438 residues long: Aspartate--tRNA(Asp/Asn) ligase (438 aa).

L-aspartate is bound at residue glutamate 176. The tract at residues 198–201 (QLYK) is aspartate. Arginine 220 contacts L-aspartate. ATP contacts are provided by residues 220 to 222 (RAE), 228 to 230 (RHL), and glutamate 361. Glutamate 361 and serine 364 together coordinate Mg(2+). L-aspartate contacts are provided by serine 364 and arginine 368. ATP is bound at residue 409–412 (GADR).

The protein belongs to the class-II aminoacyl-tRNA synthetase family. Type 2 subfamily. In terms of assembly, homodimer. Requires Mg(2+) as cofactor.

It is found in the cytoplasm. The catalysed reaction is tRNA(Asx) + L-aspartate + ATP = L-aspartyl-tRNA(Asx) + AMP + diphosphate. Functionally, aspartyl-tRNA synthetase with relaxed tRNA specificity since it is able to aspartylate not only its cognate tRNA(Asp) but also tRNA(Asn). Reaction proceeds in two steps: L-aspartate is first activated by ATP to form Asp-AMP and then transferred to the acceptor end of tRNA(Asp/Asn). This is Aspartate--tRNA(Asp/Asn) ligase from Methanocaldococcus jannaschii (strain ATCC 43067 / DSM 2661 / JAL-1 / JCM 10045 / NBRC 100440) (Methanococcus jannaschii).